Here is a 464-residue protein sequence, read N- to C-terminus: Arginine biosynthesis bifunctional protein ArgJ, chloroplastic (464 aa).

Substrate-binding residues include Thr208, Lys234, Thr245, Glu332, Asn459, and Thr464. The Nucleophile role is filled by Thr245.

Belongs to the ArgJ family. As to quaternary structure, heterodimer of an alpha and a beta chain.

The protein localises to the plastid. It localises to the chloroplast. The enzyme catalyses N(2)-acetyl-L-ornithine + L-glutamate = N-acetyl-L-glutamate + L-ornithine. It catalyses the reaction L-glutamate + acetyl-CoA = N-acetyl-L-glutamate + CoA + H(+). The protein operates within amino-acid biosynthesis; L-arginine biosynthesis; L-ornithine and N-acetyl-L-glutamate from L-glutamate and N(2)-acetyl-L-ornithine (cyclic): step 1/1. It functions in the pathway amino-acid biosynthesis; L-arginine biosynthesis; N(2)-acetyl-L-ornithine from L-glutamate: step 1/4. Functionally, catalyzes two activities which are involved in the cyclic version of arginine biosynthesis: the synthesis of acetylglutamate from glutamate and acetyl-CoA, and of ornithine by transacetylation between acetylornithine and glutamate. The polypeptide is Arginine biosynthesis bifunctional protein ArgJ, chloroplastic (Zea mays (Maize)).